A 209-amino-acid polypeptide reads, in one-letter code: Pyrrolidone-carboxylate peptidase (209 aa).

Residues E79, C142, and H164 contribute to the active site.

The protein belongs to the peptidase C15 family. In terms of assembly, homotetramer.

It localises to the cytoplasm. It catalyses the reaction Release of an N-terminal pyroglutamyl group from a polypeptide, the second amino acid generally not being Pro.. Functionally, removes 5-oxoproline from various penultimate amino acid residues except L-proline. In Saccharolobus islandicus (strain L.S.2.15 / Lassen #1) (Sulfolobus islandicus), this protein is Pyrrolidone-carboxylate peptidase.